A 333-amino-acid chain; its full sequence is MNIAAKPPLTIRLCGPRGFCAGVDRAIQIVVLALKSYGAPVYVRHEIVHNRYVVEGLEAKGAVFVEELDEIPAEHRAQPVVFSAHGVPKSVPEDAVSRNLFYLDATCPLVSKVHKQAMRHNRLGRHVVLIGHAGHPEVIGTMGQLPEGSVSLIETIEDADAYIPVDADNLGYVTQTTLSVDDTAGVIARLQERFPNLTAPAADSICYATTNRQEVVKQAAPGCDLFIIVGAPNSSNSKRLVEVALRAGAKKSILVQRAAELDWDEIGAISTLGLSAGASAPEVIVNEIIEAFRARFDARVELAETVQETENFLVNRELRSIELTAADMAFVNG.

Residue C20 participates in [4Fe-4S] cluster binding. (2E)-4-hydroxy-3-methylbut-2-enyl diphosphate is bound by residues H49 and H85. Residues H49 and H85 each contribute to the dimethylallyl diphosphate site. Isopentenyl diphosphate contacts are provided by H49 and H85. Residue C107 participates in [4Fe-4S] cluster binding. Residue H135 coordinates (2E)-4-hydroxy-3-methylbut-2-enyl diphosphate. H135 provides a ligand contact to dimethylallyl diphosphate. H135 contacts isopentenyl diphosphate. E137 (proton donor) is an active-site residue. (2E)-4-hydroxy-3-methylbut-2-enyl diphosphate is bound at residue T176. C206 is a binding site for [4Fe-4S] cluster. Positions 234, 235, 236, and 279 each coordinate (2E)-4-hydroxy-3-methylbut-2-enyl diphosphate. Residues S234, S235, N236, and S279 each coordinate dimethylallyl diphosphate. 4 residues coordinate isopentenyl diphosphate: S234, S235, N236, and S279.

This sequence belongs to the IspH family. Requires [4Fe-4S] cluster as cofactor.

The catalysed reaction is isopentenyl diphosphate + 2 oxidized [2Fe-2S]-[ferredoxin] + H2O = (2E)-4-hydroxy-3-methylbut-2-enyl diphosphate + 2 reduced [2Fe-2S]-[ferredoxin] + 2 H(+). It catalyses the reaction dimethylallyl diphosphate + 2 oxidized [2Fe-2S]-[ferredoxin] + H2O = (2E)-4-hydroxy-3-methylbut-2-enyl diphosphate + 2 reduced [2Fe-2S]-[ferredoxin] + 2 H(+). The protein operates within isoprenoid biosynthesis; dimethylallyl diphosphate biosynthesis; dimethylallyl diphosphate from (2E)-4-hydroxy-3-methylbutenyl diphosphate: step 1/1. Its pathway is isoprenoid biosynthesis; isopentenyl diphosphate biosynthesis via DXP pathway; isopentenyl diphosphate from 1-deoxy-D-xylulose 5-phosphate: step 6/6. Its function is as follows. Catalyzes the conversion of 1-hydroxy-2-methyl-2-(E)-butenyl 4-diphosphate (HMBPP) into a mixture of isopentenyl diphosphate (IPP) and dimethylallyl diphosphate (DMAPP). Acts in the terminal step of the DOXP/MEP pathway for isoprenoid precursor biosynthesis. The chain is 4-hydroxy-3-methylbut-2-enyl diphosphate reductase from Rhizobium leguminosarum bv. trifolii (strain WSM2304).